A 449-amino-acid chain; its full sequence is Phosphoglucosamine mutase (449 aa).

Ser-101 acts as the Phosphoserine intermediate in catalysis. Mg(2+)-binding residues include Ser-101, Asp-243, Asp-245, and Asp-247. Position 101 is a phosphoserine (Ser-101).

Belongs to the phosphohexose mutase family. The cofactor is Mg(2+). Post-translationally, activated by phosphorylation.

The enzyme catalyses alpha-D-glucosamine 1-phosphate = D-glucosamine 6-phosphate. Functionally, catalyzes the conversion of glucosamine-6-phosphate to glucosamine-1-phosphate. This chain is Phosphoglucosamine mutase, found in Syntrophobacter fumaroxidans (strain DSM 10017 / MPOB).